The following is a 241-amino-acid chain: Large ribosomal subunit protein uL3 (241 aa).

Disordered stretches follow at residues 139-164 and 215-241; these read VSHRSIGSTGGRQDPGKTFKNKKMPG and DAPKPGKFRLANGGDEVAAPAAEQEGA. Q151 carries the N5-methylglutamine modification.

Belongs to the universal ribosomal protein uL3 family. As to quaternary structure, part of the 50S ribosomal subunit. Forms a cluster with proteins L14 and L19. Post-translationally, methylated by PrmB.

Functionally, one of the primary rRNA binding proteins, it binds directly near the 3'-end of the 23S rRNA, where it nucleates assembly of the 50S subunit. In Rhodopseudomonas palustris (strain BisB5), this protein is Large ribosomal subunit protein uL3.